A 533-amino-acid chain; its full sequence is uncharacterized protein (533 aa).

The N-terminal stretch at 1 to 21 (MVKVWKIGFGVFLPTALLFSA) is a signal peptide. A lipid anchor (N-palmitoyl cysteine) is attached at C22. C22 carries the S-diacylglycerol cysteine lipid modification. The disordered stretch occupies residues 91-111 (LSKNKEGQTASQTRSSSEQTT). The span at 97 to 111 (GQTASQTRSSSEQTT) shows a compositional bias: polar residues.

It belongs to the MG067/MG068/MG395 family.

The protein resides in the cell membrane. This is an uncharacterized protein from Mycoplasma pneumoniae (strain ATCC 29342 / M129 / Subtype 1) (Mycoplasmoides pneumoniae).